Here is a 393-residue protein sequence, read N- to C-terminus: Short chain dehydrogenase sirQ (393 aa).

Leucine 54 contacts NADP(+). Serine 233 functions as the Proton donor in the catalytic mechanism. Lysine 259 (lowers pKa of active site Tyr) is an active-site residue. Residue alanine 286 participates in NADP(+) binding.

Belongs to the short-chain dehydrogenases/reductases (SDR) family. Highly divergent.

It participates in mycotoxin biosynthesis. In terms of biological role, short chain dehydrogenase; part of the gene cluster that mediates the biosynthesis of sirodesmin PL, an epipolythiodioxopiperazine (ETP) characterized by a disulfide bridged cyclic dipeptide and that acts as a phytotoxin which is involved in the blackleg didease of canola. SirD catalyzes the O-prenylation of L-tyrosine (L-Tyr) in the presence of dimethylallyl diphosphate (DMAPP) to yield 4-O-dimethylallyl-L-Tyr, and therefore represents probably the first pathway-specific enzyme in the biosynthesis of sirodesmin PL. 4-O-dimethylallyl-L-Tyr, then undergoes condensation with L-Ser in a reaction catalyzed by the non-ribosomal peptide synthase sirP to form the diketopiperazine (DKP) backbone. Further bishydroxylation of the DKP performed by the cytochrome P450 monooxygenase sirC leads to the production of the intermediate phomamide. This step is essential to form the reactive thiol group required for toxicity of sirodesmin PL. The next steps of sirodesmin biosynthesis are not well understood yet, but some predictions could be made from intermediate compounds identification. Phomamide is converted into phomalizarine via oxidation, probably by sirT. Further oxidation, methylation (by sirM or sirN) and reduction steps convert phomalizarine to deacetyl sirodesmin. Finally, acetyltransferase sirH probably acetylates deacetyl sirodesmin to produce sirodesmin PL. The sequence is that of Short chain dehydrogenase sirQ from Leptosphaeria maculans (Blackleg fungus).